We begin with the raw amino-acid sequence, 347 residues long: Quinolinate synthase (347 aa).

Iminosuccinate contacts are provided by histidine 47 and serine 68. Cysteine 113 contributes to the [4Fe-4S] cluster binding site. Residues 139–141 and serine 156 each bind iminosuccinate; that span reads YAN. Cysteine 200 is a binding site for [4Fe-4S] cluster. Iminosuccinate-binding positions include 226–228 and threonine 243; that span reads HPE. Cysteine 297 serves as a coordination point for [4Fe-4S] cluster.

It belongs to the quinolinate synthase family. Type 1 subfamily. [4Fe-4S] cluster is required as a cofactor.

Its subcellular location is the cytoplasm. The enzyme catalyses iminosuccinate + dihydroxyacetone phosphate = quinolinate + phosphate + 2 H2O + H(+). The protein operates within cofactor biosynthesis; NAD(+) biosynthesis; quinolinate from iminoaspartate: step 1/1. In terms of biological role, catalyzes the condensation of iminoaspartate with dihydroxyacetone phosphate to form quinolinate. In Salmonella enteritidis PT4 (strain P125109), this protein is Quinolinate synthase.